We begin with the raw amino-acid sequence, 957 residues long: Glycine dehydrogenase (decarboxylating) (957 aa).

Lys708 carries the N6-(pyridoxal phosphate)lysine modification.

It belongs to the GcvP family. The glycine cleavage system is composed of four proteins: P, T, L and H. The cofactor is pyridoxal 5'-phosphate.

It carries out the reaction N(6)-[(R)-lipoyl]-L-lysyl-[glycine-cleavage complex H protein] + glycine + H(+) = N(6)-[(R)-S(8)-aminomethyldihydrolipoyl]-L-lysyl-[glycine-cleavage complex H protein] + CO2. The glycine cleavage system catalyzes the degradation of glycine. The P protein binds the alpha-amino group of glycine through its pyridoxal phosphate cofactor; CO(2) is released and the remaining methylamine moiety is then transferred to the lipoamide cofactor of the H protein. The sequence is that of Glycine dehydrogenase (decarboxylating) from Salmonella typhi.